We begin with the raw amino-acid sequence, 462 residues long: Argininosuccinate lyase (462 aa).

This sequence belongs to the lyase 1 family. Argininosuccinate lyase subfamily.

The protein localises to the cytoplasm. The catalysed reaction is 2-(N(omega)-L-arginino)succinate = fumarate + L-arginine. Its pathway is amino-acid biosynthesis; L-arginine biosynthesis; L-arginine from L-ornithine and carbamoyl phosphate: step 3/3. The sequence is that of Argininosuccinate lyase from Bacillus cereus (strain ZK / E33L).